We begin with the raw amino-acid sequence, 1423 residues long: MKDLVKFLKAQSKSNDDFDVIKIGLASPDKIRSWSFGEVKKPETINYRTFKPERDGLFCARIFGPVKDYECLCGKYKRLKHRGVICEKCGVEVTQTKVRRDRMGHIELACPVAHIWFLKSLPSRIGLILDMPLRDIERVLYFESYVVTEPGMTDLEKNQLLTEEQFLDAEERWGDEFEAKMGAEGIQALLRDMDLEHQCEMMREELQETNSETKRKKITKRLKLLEAFQQSGNKPEWMVMTVLPVLPPDLRPLVPLDGGRFATSDLNDLYRRVINRNNRLKRLLDLVAPDIIVRNEKRMLQKSVDALLDNGRRGRAITGSNKRPLKSLADMIKGKQGRFRQNLLGKRVDYSGRSVITVGPYLHLHQCGLPKKMALELFRPFIYSKLESRGIASTIKAAKKMVEREEPIVWDILAEVIREHPILLNRAPTLHRLGIQAFEPILIEGKAIQLHPLVCAAFNADFDGDQMAVHVPLTLEAQLEARALMMSTNNVLSPASGDPIIVPSQDVVLGLYYMTREKVNAKGEGMYFLDPREAEKAYRTGQAELHARVKVRITEHVKNEAGELVAETKLLDTTIGRAILWMIAPKGMPFKVFNQTLGKKAISKLINESYRRLGLKESVILADQIMYTGFAYAARSGASVGIDDMVIPAQKHEIIRAAEAEVAEIQEQFNSGLVTAGERYNKVIDIWAAANERVAKAMMENLSTEEVINREGNPEKQASFNSIFMMADSGARGSAAQIRQLAGMRGLMARPDGSIIETPITANFREGLNVLQYFISTHGARKGLADTALKTANSGYLTRRLVDVAQDLVITEDDCGTHEGIVMTPLIEGGDVKEALRDRVLGRVVAEDVLKPGTEEVLIPRNTLIDEKWCDVIDAESVDVIKVRSVVTCNTDFGVCAKCYGRDLARGHLINQGEAVGVIAAQSIGEPGTQLTMRTFHIGGAASAAAKESSIQVKNAGTIKLTNAKFVTNKEGKIVLTSRNTELTVIDTFGRTKENYKVPYGAVLSKNDGAEVAVGEVVANWDPHTMPVISEVSGRIQFSDIVDGLTVTRQTDELTGLSSIVVQDVGERATAGKDLRPALRLVDAQGNDILIPGTDVAAQYFLPGKAIVTLDDGAEIEVGEALARIPQESVGTKDITGGLPRVADLFEARKPKEPAILAEISGIVSFGKETKGKRRLVITPAEGEAFEEMIPKWRQLNVFEGEMVQRGDVISDGAETPHDILRLRGVHAVTDYIVNEVQEVYRLQGVKINDKHIEVIVRQMLRKAVITNAYDSEFLEGEQVEVSRVKIANRKRAEEGKPLVEFERELLGITKASLATESFISAASFQETTRVLTEAAVAGKRDELRGLKENVIVGRLIPAGTGFAYHQARAKKRSQPEQAVAFEAPVAKANGFATDADIEAEFEFVADDATQSLAALLNAGDEE.

Zn(2+) is bound by residues C71, C73, C86, and C89. Positions 461, 463, and 465 each coordinate Mg(2+). Zn(2+)-binding residues include C815, C889, C896, and C899.

This sequence belongs to the RNA polymerase beta' chain family. The RNAP catalytic core consists of 2 alpha, 1 beta, 1 beta' and 1 omega subunit. When a sigma factor is associated with the core the holoenzyme is formed, which can initiate transcription. It depends on Mg(2+) as a cofactor. Requires Zn(2+) as cofactor.

The enzyme catalyses RNA(n) + a ribonucleoside 5'-triphosphate = RNA(n+1) + diphosphate. In terms of biological role, DNA-dependent RNA polymerase catalyzes the transcription of DNA into RNA using the four ribonucleoside triphosphates as substrates. The protein is DNA-directed RNA polymerase subunit beta' of Actinobacillus pleuropneumoniae serotype 3 (strain JL03).